Consider the following 24-residue polypeptide: Cytochrome c oxidase subunit 7A2, mitochondrial (24 aa).

The segment covering 1-13 (FENKVPEKQKLFQ) has biased composition (basic and acidic residues). Positions 1 to 24 (FENKVPEKQKLFQEDNGIPVHLKG) are disordered. Lys-10 is subject to N6-acetyllysine.

This sequence belongs to the cytochrome c oxidase VIIa family. In terms of assembly, component of the cytochrome c oxidase (complex IV, CIV), a multisubunit enzyme composed of 14 subunits. The complex is composed of a catalytic core of 3 subunits MT-CO1, MT-CO2 and MT-CO3, encoded in the mitochondrial DNA, and 11 supernumerary subunits COX4I, COX5A, COX5B, COX6A, COX6B, COX6C, COX7A, COX7B, COX7C, COX8 and NDUFA4, which are encoded in the nuclear genome. The complex exists as a monomer or a dimer and forms supercomplexes (SCs) in the inner mitochondrial membrane with NADH-ubiquinone oxidoreductase (complex I, CI) and ubiquinol-cytochrome c oxidoreductase (cytochrome b-c1 complex, complex III, CIII), resulting in different assemblies (supercomplex SCI(1)III(2)IV(1) and megacomplex MCI(2)III(2)IV(2)). Interacts with PET100.

It localises to the mitochondrion inner membrane. It participates in energy metabolism; oxidative phosphorylation. Its function is as follows. Component of the cytochrome c oxidase, the last enzyme in the mitochondrial electron transport chain which drives oxidative phosphorylation. The respiratory chain contains 3 multisubunit complexes succinate dehydrogenase (complex II, CII), ubiquinol-cytochrome c oxidoreductase (cytochrome b-c1 complex, complex III, CIII) and cytochrome c oxidase (complex IV, CIV), that cooperate to transfer electrons derived from NADH and succinate to molecular oxygen, creating an electrochemical gradient over the inner membrane that drives transmembrane transport and the ATP synthase. Cytochrome c oxidase is the component of the respiratory chain that catalyzes the reduction of oxygen to water. Electrons originating from reduced cytochrome c in the intermembrane space (IMS) are transferred via the dinuclear copper A center (CU(A)) of subunit 2 and heme A of subunit 1 to the active site in subunit 1, a binuclear center (BNC) formed by heme A3 and copper B (CU(B)). The BNC reduces molecular oxygen to 2 water molecules using 4 electrons from cytochrome c in the IMS and 4 protons from the mitochondrial matrix. The protein is Cytochrome c oxidase subunit 7A2, mitochondrial (COX7A2) of Ovis aries (Sheep).